The chain runs to 307 residues: Deaminated glutathione amidase, chloroplastic/cytosolic (307 aa).

The transit peptide at 1-36 (MNAYSVSLDFTKPSLFTRITLSSQIPLTMATTVNKT) directs the protein to the chloroplast. One can recognise a CN hydrolase domain in the interval 37 to 286 (VRVAAAQMTS…TGIVVADIDF (250 aa)). Glu76 (proton acceptor) is an active-site residue. Catalysis depends on Lys147, which acts as the Proton donor. Residue Cys188 is the Nucleophile of the active site.

It belongs to the nitrilase superfamily. NIT1/NIT2 family.

The protein resides in the plastid. It is found in the chloroplast. The protein localises to the cytoplasm. It catalyses the reaction N-(4-oxoglutaryl)-L-cysteinylglycine + H2O = L-cysteinylglycine + 2-oxoglutarate. It carries out the reaction N-(4-carboxy-4-oxobutanoyl)-L-ethylglycylglycine + H2O = N-(2-aminobutanoyl)glycine + 2-oxoglutarate. Its function is as follows. Catalyzes the hydrolysis of the amide bond in N-(4-oxoglutarate)-L-cysteinylglycine (deaminated glutathione), a metabolite repair reaction to dispose of the harmful deaminated glutathione. Possesses amidase activity toward deaminated ophthalmate in vitro. This chain is Deaminated glutathione amidase, chloroplastic/cytosolic, found in Arabidopsis thaliana (Mouse-ear cress).